A 162-amino-acid polypeptide reads, in one-letter code: UPF0305 protein MMP0665 (162 aa).

Belongs to the UPF0305 family.

In Methanococcus maripaludis (strain DSM 14266 / JCM 13030 / NBRC 101832 / S2 / LL), this protein is UPF0305 protein MMP0665.